The chain runs to 1205 residues: cGMP-specific 3',5'-cyclic phosphodiesterase (1205 aa).

Positions 1-153 (MTDVSSPAGG…TKASTTASQQ (153 aa)) are disordered. The span at 18-32 (TTSSSPAATTSASSS) shows a compositional bias: low complexity. A compositionally biased stretch (polar residues) spans 33 to 48 (KPLTNGANKTTISTTA). The segment covering 62-71 (GAIPASSSSG) has biased composition (low complexity). Over residues 83-94 (SNNNRPAATNRS) the composition is skewed to polar residues. The span at 118–140 (SSSSPSQSPSQTQASIQTQTSQQ) shows a compositional bias: low complexity. 2 consecutive GAF domains span residues 259–411 (DIDV…GIGI) and 443–624 (NLEC…GLGI). The PDEase domain occupies 654–1052 (SQDQTEKLTQ…RNWQDLAEKV (399 aa)). H730 acts as the Proton donor in catalysis. A divalent metal cation-binding residues include H734, H770, D771, and D956. Disordered stretches follow at residues 1093-1122 (QQSQ…TGAL) and 1152-1205 (SHVS…CALL). Composition is skewed to basic and acidic residues over residues 1098-1109 (GSEDSHTPEHQR) and 1152-1162 (SHVSEDMDDKS). The segment covering 1171-1191 (ASGSMGRMSASSSTSSAGGQM) has biased composition (low complexity). Basic residues predominate over residues 1195-1205 (SKKRSKLCALL). C1202 carries the cysteine methyl ester modification. A lipid anchor (S-farnesyl cysteine) is attached at C1202. Residues 1203-1205 (ALL) constitute a propeptide, removed in mature form.

This sequence belongs to the cyclic nucleotide phosphodiesterase family. Interacts with PrBP. Requires a divalent metal cation as cofactor.

Its subcellular location is the cell membrane. It catalyses the reaction 3',5'-cyclic GMP + H2O = GMP + H(+). Functionally, has a role regulating cGMP transport in Malpighian tubule principal cells. This chain is cGMP-specific 3',5'-cyclic phosphodiesterase, found in Drosophila sechellia (Fruit fly).